Reading from the N-terminus, the 193-residue chain is Crossover junction endodeoxyribonuclease RuvC (193 aa).

Catalysis depends on residues Asp7, Glu68, and Asp141. Mg(2+) contacts are provided by Asp7, Glu68, and Asp141.

It belongs to the RuvC family. In terms of assembly, homodimer which binds Holliday junction (HJ) DNA. The HJ becomes 2-fold symmetrical on binding to RuvC with unstacked arms; it has a different conformation from HJ DNA in complex with RuvA. In the full resolvosome a probable DNA-RuvA(4)-RuvB(12)-RuvC(2) complex forms which resolves the HJ. Mg(2+) is required as a cofactor.

Its subcellular location is the cytoplasm. It catalyses the reaction Endonucleolytic cleavage at a junction such as a reciprocal single-stranded crossover between two homologous DNA duplexes (Holliday junction).. The RuvA-RuvB-RuvC complex processes Holliday junction (HJ) DNA during genetic recombination and DNA repair. Endonuclease that resolves HJ intermediates. Cleaves cruciform DNA by making single-stranded nicks across the HJ at symmetrical positions within the homologous arms, yielding a 5'-phosphate and a 3'-hydroxyl group; requires a central core of homology in the junction. The consensus cleavage sequence is 5'-(A/T)TT(C/G)-3'. Cleavage occurs on the 3'-side of the TT dinucleotide at the point of strand exchange. HJ branch migration catalyzed by RuvA-RuvB allows RuvC to scan DNA until it finds its consensus sequence, where it cleaves and resolves the cruciform DNA. This Renibacterium salmoninarum (strain ATCC 33209 / DSM 20767 / JCM 11484 / NBRC 15589 / NCIMB 2235) protein is Crossover junction endodeoxyribonuclease RuvC.